A 431-amino-acid chain; its full sequence is Dihydroorotase (431 aa).

Zn(2+)-binding residues include His59 and His61. Substrate-binding positions include 61–63 (HLR) and Asn93. 4 residues coordinate Zn(2+): Asp151, His178, His231, and Asp304. The active site involves Asp304. Substrate contacts are provided by residues His308 and 322–323 (FG).

This sequence belongs to the metallo-dependent hydrolases superfamily. DHOase family. Class I DHOase subfamily. It depends on Zn(2+) as a cofactor.

The catalysed reaction is (S)-dihydroorotate + H2O = N-carbamoyl-L-aspartate + H(+). Its pathway is pyrimidine metabolism; UMP biosynthesis via de novo pathway; (S)-dihydroorotate from bicarbonate: step 3/3. Its function is as follows. Catalyzes the reversible cyclization of carbamoyl aspartate to dihydroorotate. The chain is Dihydroorotase from Thermoanaerobacter sp. (strain X514).